We begin with the raw amino-acid sequence, 465 residues long: Mothers against decapentaplegic homolog 5 (465 aa).

Position 2 is an N-acetylthreonine (T2). In terms of domain architecture, MH1 spans 13-137; it reads PAVKRLLGWK…YKRVESPVLP (125 aa). The Zn(2+) site is built by C65, C110, C122, and H127. Residues 163–249 are disordered; sequence NEPHMPQNAT…PMDTSNNMIP (87 aa). A compositionally biased stretch (polar residues) spans 169–182; the sequence is QNATFPDSFHQPNN. A compositionally biased stretch (pro residues) spans 186-197; sequence PLSPNSPYPPSP. The span at 198-214 shows a compositional bias: low complexity; sequence ASSTYPNSPASSGPGSP. Positions 234–249 are enriched in polar residues; it reads GQDNSQPMDTSNNMIP. The 195-residue stretch at 271–465 folds into the MH2 domain; the sequence is WCSIVYYELN…SPLNPISSVS (195 aa). Residues S463 and S465 each carry the phosphoserine modification.

Belongs to the dwarfin/SMAD family. In terms of assembly, homodimer. Forms trimers with the co-SMAD SMAD4. Interacts with PEBP2-alpha subunit and SMURF1. Interacts with SUV39H1 and SUV39H2. Interacts (via MH2 domain) with LEMD3. Interacts with WWP1. Interacts with TMEM119. Interacts with ZNF8. Interacts with RANBP3L. Interacts with HK1. Interacts with HGS; this interaction attenuates BMP signaling. Post-translationally, phosphorylated on serine by BMP (bone morphogenetic proteins) type 1 receptor kinase. Ubiquitin-mediated proteolysis by SMAD-specific E3 ubiquitin ligase SMURF1. In terms of tissue distribution, ubiquitous.

Its subcellular location is the cytoplasm. The protein localises to the nucleus. It localises to the mitochondrion. Transcriptional regulator that plays a role in various cellular processes including embryonic development, cell differentiation, angiogenesis and tissue homeostasis. Upon BMP ligand binding to their receptors at the cell surface, is phosphorylated by activated type I BMP receptors (BMPRIs) and associates with SMAD4 to form a heteromeric complex which translocates into the nucleus acting as transcription factor. In turn, the hetero-trimeric complex recognizes cis-regulatory elements containing Smad Binding Elements (SBEs) to modulate the outcome of the signaling network. Non-phosphorylated SMAD5 has a cytoplasmic role in energy metabolism regulation by promoting mitochondrial respiration and glycolysis in response to cytoplasmic pH changes. Mechanistically, interacts with hexokinase 1/HK1 and thereby accelerates glycolysis. The polypeptide is Mothers against decapentaplegic homolog 5 (SMAD5) (Homo sapiens (Human)).